The sequence spans 184 residues: Thymidine kinase (184 aa).

Residues 10 to 17 (GPMYSGKT), H53, and 83 to 86 (DEVQ) contribute to the ATP site. E84 acts as the Proton acceptor in catalysis. Position 115 (H115) interacts with substrate. Zn(2+) contacts are provided by C140 and C143. Residues 161 to 164 (IDVG) and Y169 contribute to the substrate site. Positions 173 and 176 each coordinate Zn(2+).

This sequence belongs to the thymidine kinase family. In terms of assembly, homotetramer.

The protein resides in the cytoplasm. It catalyses the reaction thymidine + ATP = dTMP + ADP + H(+). The polypeptide is Thymidine kinase (tdk) (Thermotoga maritima (strain ATCC 43589 / DSM 3109 / JCM 10099 / NBRC 100826 / MSB8)).